A 61-amino-acid chain; its full sequence is Photosystem II reaction center protein K (61 aa).

A propeptide spanning residues 1-24 is cleaved from the precursor; it reads MPNILSLTCICFNSVIYPTSFFFA. The chain crosses the membrane as a helical span at residues 32–52; it reads IFNPIVDFMPVIPVLFFLLAF.

The protein belongs to the PsbK family. As to quaternary structure, PSII is composed of 1 copy each of membrane proteins PsbA, PsbB, PsbC, PsbD, PsbE, PsbF, PsbH, PsbI, PsbJ, PsbK, PsbL, PsbM, PsbT, PsbX, PsbY, PsbZ, Psb30/Ycf12, at least 3 peripheral proteins of the oxygen-evolving complex and a large number of cofactors. It forms dimeric complexes.

Its subcellular location is the plastid. It localises to the chloroplast thylakoid membrane. One of the components of the core complex of photosystem II (PSII). PSII is a light-driven water:plastoquinone oxidoreductase that uses light energy to abstract electrons from H(2)O, generating O(2) and a proton gradient subsequently used for ATP formation. It consists of a core antenna complex that captures photons, and an electron transfer chain that converts photonic excitation into a charge separation. This chain is Photosystem II reaction center protein K, found in Oryza nivara (Indian wild rice).